We begin with the raw amino-acid sequence, 138 residues long: Host cell factor C1 regulator 1 (138 aa).

An interaction with HCFC1 region spans residues 76-79; the sequence is DHPY. Residues 110–119 carry the Nuclear export signal motif; sequence IPEALRLLRL.

As to quaternary structure, interacts with HCFC1. Widely expressed.

It localises to the cytoplasm. It is found in the nucleus. In terms of biological role, regulates HCFC1 activity by modulating its subcellular localization. Overexpression of HCFC1R1 leads to accumulation of HCFC1 in the cytoplasm. HCFC1R1-mediated export may provide the pool of cytoplasmic HCFC1 required for import of virion-derived VP16 into the nucleus. This Homo sapiens (Human) protein is Host cell factor C1 regulator 1 (HCFC1R1).